The primary structure comprises 356 residues: D-alanine--D-alanine ligase (356 aa).

In terms of domain architecture, ATP-grasp spans 146-350; that stretch reads KKLLVAEGLP…YAELLDTLIQ (205 aa). 173–228 contributes to the ATP binding site; that stretch reads KERLGLPVFVKPARGGSSIGVSKVSAWEDLEAALTLAYESDDKVLIEPEISGAEVE. Residues aspartate 305, glutamate 317, and asparagine 319 each coordinate Mg(2+).

The protein belongs to the D-alanine--D-alanine ligase family. Requires Mg(2+) as cofactor. Mn(2+) is required as a cofactor.

It is found in the cytoplasm. It catalyses the reaction 2 D-alanine + ATP = D-alanyl-D-alanine + ADP + phosphate + H(+). It functions in the pathway cell wall biogenesis; peptidoglycan biosynthesis. Functionally, cell wall formation. The protein is D-alanine--D-alanine ligase of Corynebacterium aurimucosum (strain ATCC 700975 / DSM 44827 / CIP 107346 / CN-1) (Corynebacterium nigricans).